Consider the following 486-residue polypeptide: Ribulose bisphosphate carboxylase large chain 3 (486 aa).

Substrate contacts are provided by asparagine 125 and threonine 175. Lysine 177 acts as the Proton acceptor in catalysis. Lysine 179 lines the substrate pocket. The Mg(2+) site is built by lysine 203, aspartate 205, and glutamate 206. Position 203 is an N6-carboxylysine (lysine 203). Histidine 295 serves as the catalytic Proton acceptor. Arginine 296, histidine 328, and serine 380 together coordinate substrate.

The protein belongs to the RuBisCO large chain family. Type I subfamily. Heterohexadecamer of 8 large chains and 8 small chains. Mg(2+) is required as a cofactor.

The catalysed reaction is 2 (2R)-3-phosphoglycerate + 2 H(+) = D-ribulose 1,5-bisphosphate + CO2 + H2O. The enzyme catalyses D-ribulose 1,5-bisphosphate + O2 = 2-phosphoglycolate + (2R)-3-phosphoglycerate + 2 H(+). Functionally, ruBisCO catalyzes two reactions: the carboxylation of D-ribulose 1,5-bisphosphate, the primary event in carbon dioxide fixation, as well as the oxidative fragmentation of the pentose substrate. Both reactions occur simultaneously and in competition at the same active site. The protein is Ribulose bisphosphate carboxylase large chain 3 of Bradyrhizobium sp. (strain BTAi1 / ATCC BAA-1182).